The chain runs to 387 residues: MPTRKSNTYLSLVNSYLIDSPQPSSINYWWNLGSLLGLCLVIQIASGVFLAMHYSSNIELAFDSVEHIMRDVNAGWLIRYIHANGASFFFICMYLHIGKALYYGSYKQPRVMLWVIGVVIFILTMAIAFMGYCLVYGQMSHWGATVITNLLSAIPFIGNDIVPFIWGGFSVSNPTIQRFFALHFLLPFILAALVCMHLMALHVHGSSNPVGITGNIDRLPMHPYFIFKDLITVFVFLLIFSLFVFYSPNTLGHPDNYIPGNPMVTPPSIVPEWYLLPFYAILRSIPDKLGGVIAMFGAILILLSLPYTDRSIIRGNSFKVLSKLAFYLFVFNFILLGNLGQLHVEVPYIQLGQFATAYYFAHYIIVVPVISTLENILYYIGTQTRVK.

Residues 32–52 (LGSLLGLCLVIQIASGVFLAM) form a helical membrane-spanning segment. Heme b-binding residues include H82 and H96. 8 helical membrane passes run 85–105 (GASF…YYGS), 116–136 (IGVV…CLVY), 151–171 (LSAI…GFSV), 179–199 (FFAL…MHLM), 225–245 (FIFK…LFVF), 289–309 (LGGV…PYTD), 324–344 (LAFY…QLHV), and 350–370 (QLGQ…VPVI). H183 and H197 together coordinate heme b.

The protein belongs to the cytochrome b family. In terms of assembly, component of the ubiquinol-cytochrome c oxidoreductase (cytochrome b-c1 complex, complex III, CIII), a multisubunit enzyme composed of 10 subunits. The complex is composed of 3 respiratory subunits cytochrome b (COB), cytochrome c1 (CYT1) and Rieske protein (RIP1), 2 core protein subunits COR1 and QCR2, and 5 low-molecular weight protein subunits QCR6, QCR7, QCR8, QCR9 and QCR10. The complex exists as an obligatory dimer and forms supercomplexes (SCs) in the inner mitochondrial membrane with a monomer or a dimer of cytochrome c oxidase (complex IV, CIV), resulting in 2 different assemblies (supercomplexes III(2)IV and III(2)IV(2)). Heme b serves as cofactor.

Its subcellular location is the mitochondrion inner membrane. Functionally, component of the ubiquinol-cytochrome c oxidoreductase, a multisubunit transmembrane complex that is part of the mitochondrial electron transport chain which drives oxidative phosphorylation. The complex plays an important role in the uptake of multiple carbon sources present in different host niches. This chain is Cytochrome b, found in Candida albicans (strain SC5314 / ATCC MYA-2876) (Yeast).